The chain runs to 420 residues: Pre-mRNA-splicing factor RBM22 (420 aa).

Ala-2 carries the post-translational modification N-acetylalanine. Ser-4 and Ser-102 each carry phosphoserine. Glycyl lysine isopeptide (Lys-Gly) (interchain with G-Cter in SUMO2) cross-links involve residues Lys-139 and Lys-149. Residues 159–186 form a C3H1-type zinc finger; the sequence is RNRPHICSFWVKGECKRGEECPYRHEKP. Lys-212 bears the N6-acetyllysine mark. In terms of domain architecture, RRM spans 232 to 305; that stretch reads TTLYVGGLGD…RRLNVKWGRS (74 aa). A Glycyl lysine isopeptide (Lys-Gly) (interchain with G-Cter in SUMO2) cross-link involves residue Lys-290. Disordered stretches follow at residues 303–343 and 371–420; these read GRSQ…AAEE and IAPP…HSSP. Basic and acidic residues predominate over residues 309–318; sequence RGKEKEKDGT.

Belongs to the SLT11 family. As to quaternary structure, component of the pre-catalytic and catalytic spliceosome complexes. Component of the postcatalytic spliceosome P complex. Interacts with PDCD6; the interaction induces translocation of PDCD6 in the cytoplasm. Interacts with PPIL1.

The protein resides in the nucleus. It is found in the cytoplasm. Its function is as follows. Required for pre-mRNA splicing as component of the activated spliceosome. Involved in the first step of pre-mRNA splicing. Binds directly to the internal stem-loop (ISL) domain of the U6 snRNA and to the pre-mRNA intron near the 5' splice site during the activation and catalytic phases of the spliceosome cycle. Involved in both translocations of the nuclear SLU7 to the cytoplasm and the cytosolic calcium-binding protein PDCD6 to the nucleus upon cellular stress responses. This is Pre-mRNA-splicing factor RBM22 (Rbm22) from Rattus norvegicus (Rat).